Consider the following 168-residue polypeptide: Photosystem I assembly protein Ycf3 (168 aa).

TPR repeat units follow at residues 35 to 68 (AFTY…EIDP), 72 to 105 (SYIL…NPFL), and 120 to 153 (GEQA…TPGN).

Belongs to the Ycf3 family.

It localises to the plastid. The protein resides in the chloroplast thylakoid membrane. Functionally, essential for the assembly of the photosystem I (PSI) complex. May act as a chaperone-like factor to guide the assembly of the PSI subunits. This is Photosystem I assembly protein Ycf3 from Phaseolus vulgaris (Kidney bean).